A 245-amino-acid chain; its full sequence is uncharacterized protein (245 aa).

The N-terminal stretch at 1 to 19 is a signal peptide; it reads MKLTQFISYAILSLSGVQA.

The protein localises to the secreted. This is an uncharacterized protein from Arthroderma benhamiae (strain ATCC MYA-4681 / CBS 112371) (Trichophyton mentagrophytes).